The chain runs to 614 residues: Spastin (614 aa).

Residues 1–45 are disordered; the sequence is MNSPGGRGKKKGSGGPSSPVPPRPPPPCQARSRPAPKPAPPPQSP. The segment at 1–50 is required for nuclear localization; that stretch reads MNSPGGRGKKKGSGGPSSPVPPRPPPPCQARSRPAPKPAPPPQSPHKRNL. Residues 1–56 lie on the Cytoplasmic side of the membrane; the sequence is MNSPGGRGKKKGSGGPSSPVPPRPPPPCQARSRPAPKPAPPPQSPHKRNLYYFSYP. The tract at residues 1-80 is required for interaction with ATL1; that stretch reads MNSPGGRGKK…LGLLFVWLCQ (80 aa). The required for midbody localization stretch occupies residues 1–192; it reads MNSPGGRGKK…LVMAKDRLQL (192 aa). A required for interaction with RTN1 region spans residues 1–298; it reads MNSPGGRGKK…STPKTNRTNK (298 aa). A Nuclear localization signal motif is present at residues 4 to 11; sequence PGGRGKKK. Pro residues-rich tracts occupy residues 18 to 28 and 35 to 44; these read SPVPPRPPPPC and APKPAPPPQS. Positions 50 to 87 are required for interaction with SSNA1 and microtubules; that stretch reads LYYFSYPLFLGFALLRLVAFHLGLLFVWLCQRFSRALM. The helical intramembrane region spans 57–77; that stretch reads LFLGFALLRLVAFHLGLLFVW. Positions 59–67 match the Nuclear export signal motif; that stretch reads LGFALLRLV. The Cytoplasmic segment spans residues 78–614; the sequence is LCQRFSRALM…WNKDFGDTTV (537 aa). Residues 110–194 are sufficient for interaction with CHMP1B; it reads EAERVRAFHK…MAKDRLQLLE (85 aa). The segment at 112 to 198 is required for interaction with microtubules; the sequence is ERVRAFHKQA…RLQLLEKLQP (87 aa). The MIT domain occupies 118-193; it reads HKQAFEYISV…VMAKDRLQLL (76 aa). The tract at residues 220 to 310 is disordered; that stretch reads NGHLQSESGA…TPTTAARKKK (91 aa). Residues 226–614 are sufficient for microtubule severing; that stretch reads ESGAVPKRKD…WNKDFGDTTV (389 aa). A phosphoserine mark is found at Ser-243 and Ser-266. The tract at residues 268–326 is required for interaction with microtubules and microtubule severing; the sequence is SGLSMVSGVRQGPGSAAATHKSTPKTNRTNKPSTPTTAARKKKDLKNFRNVDSNLANLI. Polar residues predominate over residues 287 to 304; that stretch reads HKSTPKTNRTNKPSTPTT. Thr-304 is modified (phosphothreonine). The Nuclear localization signal signature appears at 307-310; that stretch reads RKKK. 380-387 lines the ATP pocket; the sequence is GPPGNGKT. Ser-595 is modified (phosphoserine).

The protein belongs to the AAA ATPase family. Spastin subfamily. In terms of assembly, homohexamer. Mostly monomeric, but assembles into hexameric structure for short periods of time. Oligomerization seems to be a prerequisite for catalytic activity. Binding to ATP in a cleft between two adjacent subunits stabilizes the homohexameric form. Binds to microtubules at least in part via the alpha-tubulin and beta-tubulin tails. The hexamer adopts a ring conformation through which microtubules pass prior to being severed. Does not interact strongly with tubulin heterodimers. Interacts (via MIT domain) with CHMP1B; the interaction is direct. Interacts with SSNA1. Interacts with ATL1. Interacts with RTN1. Interacts with ZFYVE27. Interacts with REEP1. Interacts (via MIT domain) with IST1.

Its subcellular location is the membrane. The protein localises to the endoplasmic reticulum. It is found in the midbody. The protein resides in the cytoplasm. It localises to the cytoskeleton. Its subcellular location is the microtubule organizing center. The protein localises to the centrosome. It is found in the perinuclear region. The protein resides in the nucleus. It localises to the spindle. Its subcellular location is the cell projection. The protein localises to the axon. It carries out the reaction n ATP + n H2O + a microtubule = n ADP + n phosphate + (n+1) alpha/beta tubulin heterodimers.. Allosteric enzyme with a cooperative mechanism; at least two neighbor subunits influence each other strongly in spastin hexamers. Microtubule binding promotes cooperative interactions among spastin subunits. In terms of biological role, ATP-dependent microtubule severing protein that specifically recognizes and cuts microtubules that are polyglutamylated. Preferentially recognizes and acts on microtubules decorated with short polyglutamate tails: severing activity increases as the number of glutamates per tubulin rises from one to eight, but decreases beyond this glutamylation threshold. Severing activity is not dependent on tubulin acetylation or detyrosination. Microtubule severing promotes reorganization of cellular microtubule arrays and the release of microtubules from the centrosome following nucleation. It is critical for the biogenesis and maintenance of complex microtubule arrays in axons, spindles and cilia. SPAST is involved in abscission step of cytokinesis and nuclear envelope reassembly during anaphase in cooperation with the ESCRT-III complex. Recruited at the midbody, probably by IST1, and participates in membrane fission during abscission together with the ESCRT-III complex. Recruited to the nuclear membrane by IST1 and mediates microtubule severing, promoting nuclear envelope sealing and mitotic spindle disassembly during late anaphase. Required for membrane traffic from the endoplasmic reticulum (ER) to the Golgi and endosome recycling. Recruited by IST1 to endosomes and regulates early endosomal tubulation and recycling by mediating microtubule severing. Probably plays a role in axon growth and the formation of axonal branches. The polypeptide is Spastin (Bos taurus (Bovine)).